The following is a 465-amino-acid chain: ATP synthase subunit beta (465 aa).

An ATP-binding site is contributed by 152–159; sequence GGAGVGKT.

It belongs to the ATPase alpha/beta chains family. In terms of assembly, F-type ATPases have 2 components, CF(1) - the catalytic core - and CF(0) - the membrane proton channel. CF(1) has five subunits: alpha(3), beta(3), gamma(1), delta(1), epsilon(1). CF(0) has three main subunits: a(1), b(2) and c(9-12). The alpha and beta chains form an alternating ring which encloses part of the gamma chain. CF(1) is attached to CF(0) by a central stalk formed by the gamma and epsilon chains, while a peripheral stalk is formed by the delta and b chains.

The protein localises to the cell inner membrane. It catalyses the reaction ATP + H2O + 4 H(+)(in) = ADP + phosphate + 5 H(+)(out). Its function is as follows. Produces ATP from ADP in the presence of a proton gradient across the membrane. The catalytic sites are hosted primarily by the beta subunits. The sequence is that of ATP synthase subunit beta from Campylobacter jejuni subsp. jejuni serotype O:6 (strain 81116 / NCTC 11828).